The primary structure comprises 205 residues: Guanylate kinase (205 aa).

The Guanylate kinase-like domain maps to Gly6–Thr184. An ATP-binding site is contributed by Gly13–Gly20.

It belongs to the guanylate kinase family.

The protein resides in the cytoplasm. The catalysed reaction is GMP + ATP = GDP + ADP. Its function is as follows. Essential for recycling GMP and indirectly, cGMP. The sequence is that of Guanylate kinase from Shouchella clausii (strain KSM-K16) (Alkalihalobacillus clausii).